Here is a 93-residue protein sequence, read N- to C-terminus: UPF0390 protein C24B10.18 (93 aa).

The disordered stretch occupies residues 1-32; it reads MAQGEFKKKKNSSANKGGRVTKHSKNPKKGAR. Residues 19 to 31 show a composition bias toward basic residues; sequence RVTKHSKNPKKGA.

The protein belongs to the UPF0390 family.

In Schizosaccharomyces pombe (strain 972 / ATCC 24843) (Fission yeast), this protein is UPF0390 protein C24B10.18.